The sequence spans 586 residues: BTB/POZ domain and ankyrin repeat-containing protein NPR1 (586 aa).

The 77-residue stretch at 63 to 139 (SDADIVVEGI…VYTGKLKPSP (77 aa)) folds into the BTB domain. The C2HC NPR-type zinc finger occupies 142–156 (VSTCVHNVCAHDACR). Positions 145, 150, 152, and 155 each coordinate Zn(2+). ANK repeat units lie at residues 266-296 (KRIR…TLDE), 298-325 (NALH…DVNL), and 329-358 (RGYT…RASE). Residues 388–522 (EANKDRICID…LDKFIDDDLP (135 aa)) form a salicylic acid-binding core (SBC) region. Salicylate is bound at residue arginine 433. The interval 561-586 (NLSGLSSSSSTTSPEKIGANQKVREP) is disordered. The segment covering 562–573 (LSGLSSSSSTTS) has biased composition (low complexity).

It belongs to the plant 'ANKYRIN-BTB/POZ' family. 'NPR1-like' subfamily. As to expression, highly expressed in leaves. Expressed at low levels in roots and stems.

It is found in the cytoplasm. Its subcellular location is the nucleus. It localises to the nuclear body. It participates in protein modification; protein ubiquitination. Salicylic acid (SA)-binding substrate-specific adapter of an E3 ubiquitin-protein ligase complex (CUL3-RBX1-BTB) which mediates the ubiquitination and subsequent proteasomal degradation of target proteins. Transcription cofactor that represses gene expression in the absence of salicylic acid (SA), when attached to negative cis-elements (W-box) with WRKY transcription factors, but stimulates gene expression upon activation by SA, when sumoylated and attached to positive cis-elements (as-1) with TGA transcription factors, thus confering immunity through a series of gene regulations ending in a significant increase in antimicrobial and defense genes expression. Probable component of the salicylic acid (SA) defense signaling pathway and pathogen-induced systemic acquired resistance (SAR). May be involved in disease resistance against fungal pathogens. May be involved in tolerance to salt and osmotic stresses. The polypeptide is BTB/POZ domain and ankyrin repeat-containing protein NPR1 (Malus hupehensis (Chinese crab apple)).